The sequence spans 180 residues: uncharacterized protein (180 aa).

The N-acetyltransferase domain occupies 31–180 (LLVRTAEWLR…HLFEKEITAE (150 aa)).

Belongs to the acetyltransferase family.

This is an uncharacterized protein from Bacillus subtilis (strain 168).